We begin with the raw amino-acid sequence, 91 residues long: Small ribosomal subunit protein uS19 (91 aa).

Residues 72-91 form a disordered region; it reads GEFSPTRKFGGHGDDKKKKK. Residues 82-91 show a composition bias toward basic and acidic residues; the sequence is GHGDDKKKKK.

This sequence belongs to the universal ribosomal protein uS19 family.

Protein S19 forms a complex with S13 that binds strongly to the 16S ribosomal RNA. In Spiroplasma kunkelii, this protein is Small ribosomal subunit protein uS19.